We begin with the raw amino-acid sequence, 147 residues long: MMKLNLFINANETESYIDIHAPKMNDHVQSIINAVNDLDKSHTLVGYIDKEIHIIHISDVITFQVINKNVTAITRNQKFKLKLRLYELEKQLPQHFIRISKSEIVNKYCIEKLLLEPNGLIRMYLKDAHYTYSSRRYLKSIKERLSI.

Positions 44–147 constitute an HTH LytTR-type domain; it reads LVGYIDKEIH…LKSIKERLSI (104 aa).

The protein localises to the cytoplasm. This is an uncharacterized protein from Staphylococcus aureus (strain bovine RF122 / ET3-1).